Here is a 141-residue protein sequence, read N- to C-terminus: Hemoglobin subunit alpha-D (141 aa).

Residues 1–141 (MLTADDKKLI…VAAVLAEKYR (141 aa)) enclose the Globin domain. Heme b contacts are provided by H58 and H87.

This sequence belongs to the globin family. Heterotetramer of two alpha-D chains and two beta chains. Red blood cells.

Involved in oxygen transport from the lung to the various peripheral tissues. The sequence is that of Hemoglobin subunit alpha-D (HBAD) from Aegypius monachus (Cinereous vulture).